We begin with the raw amino-acid sequence, 172 residues long: AIG2-like protein B (172 aa).

15-20 (YGSFQE) contributes to the substrate binding site. E83 serves as the catalytic Proton acceptor. Basic and acidic residues predominate over residues 146–165 (KRNPQGKGRDDFSNVLKEED). Residues 146-172 (KRNPQGKGRDDFSNVLKEEDPANAPSS) form a disordered region.

This sequence belongs to the gamma-glutamylcyclotransferase family. Expressed in flowerss, leaves, stems, seeds and roots.

The protein localises to the cell membrane. Putative gamma-glutamylcyclotransferase. In Arabidopsis thaliana (Mouse-ear cress), this protein is AIG2-like protein B.